Reading from the N-terminus, the 244-residue chain is uncharacterized protein (244 aa).

Residues 1–11 (MSRRSRSRSRS) show a composition bias toward basic residues. Disordered regions lie at residues 1-104 (MSRR…TLNE) and 213-244 (ARQK…KFGK). Residues 12–31 (PKRDREERKRREDRDRDRER) are compositionally biased toward basic and acidic residues. Residues 32-46 (KRDRKDRERKRRHRS) are compositionally biased toward basic residues. The span at 63–75 (FREERRRRERNES) shows a compositional bias: basic and acidic residues. A compositionally biased stretch (pro residues) spans 77 to 89 (KLPPPPPPPPSDP). A compositionally biased stretch (basic and acidic residues) spans 213–223 (ARQKSDMKKNE). Residues 224–234 (QQAILNKSGNS) show a composition bias toward polar residues.

This is an uncharacterized protein from Caenorhabditis elegans.